Here is a 574-residue protein sequence, read N- to C-terminus: Sulfate adenylyltransferase (574 aa).

Positions 1–170 are N-terminal; sequence MANAPHGGVL…VQAVSKPAYY (170 aa). Residues 171–395 form a catalytic region; the sequence is DYVALRYTPA…LRESYPPKAK (225 aa). Residue glutamine 198 coordinates sulfate. ATP is bound by residues 198–201 and 292–295; these read QTRN and GRDH. Active-site residues include threonine 199, arginine 200, and asparagine 201. Position 200 (arginine 200) interacts with sulfate. Alanine 296 is a binding site for sulfate. Methionine 334 provides a ligand contact to ATP. The tract at residues 396–574 is allosteric regulation domain; adenylyl-sulfate kinase-like; the sequence is QGFTLFLTGL…ILLLEAQSLI (179 aa). 3'-phosphoadenylyl sulfate is bound by residues 435 to 438, arginine 452, 478 to 479, and lysine 519; these read ETVR and IA.

The protein in the N-terminal section; belongs to the sulfate adenylyltransferase family. It in the C-terminal section; belongs to the APS kinase family. Homohexamer. Dimer of trimers.

It localises to the cytoplasm. The catalysed reaction is sulfate + ATP + H(+) = adenosine 5'-phosphosulfate + diphosphate. The protein operates within sulfur metabolism; hydrogen sulfide biosynthesis; sulfite from sulfate: step 1/3. With respect to regulation, allosterically inhibited by 3'-phosphoadenosine 5'-phosphosulfate (PAPS). Functionally, catalyzes the first intracellular reaction of sulfate assimilation, forming adenosine-5'-phosphosulfate (APS) from inorganic sulfate and ATP. Plays an important role in sulfate activation as a component of the biosynthesis pathway of sulfur-containing amino acids. The polypeptide is Sulfate adenylyltransferase (Mycosarcoma maydis (Corn smut fungus)).